The sequence spans 1493 residues: Mediator of RNA polymerase II transcription subunit 14 (1493 aa).

Disordered regions lie at residues 1–51 (MPSS…YHAA), 71–110 (MIGV…SAKG), 408–427 (TEQG…APTV), 674–693 (QRPR…RSAS), 894–913 (EAGT…NDVD), and 957–997 (GSNT…SSDD). Positions 90–100 (PDSKQSSDADG) are enriched in basic and acidic residues.

This sequence belongs to the Mediator complex subunit 14 family. As to quaternary structure, component of the Mediator complex.

Its subcellular location is the nucleus. In terms of biological role, component of the Mediator complex, a coactivator involved in the regulated transcription of nearly all RNA polymerase II-dependent genes. Mediator functions as a bridge to convey information from gene-specific regulatory proteins to the basal RNA polymerase II transcription machinery. Mediator is recruited to promoters by direct interactions with regulatory proteins and serves as a scaffold for the assembly of a functional preinitiation complex with RNA polymerase II and the general transcription factors. This Mycosarcoma maydis (Corn smut fungus) protein is Mediator of RNA polymerase II transcription subunit 14 (RGR1).